The sequence spans 140 residues: Protein SamA (140 aa).

Residues serine 61 and lysine 98 each act as for autocatalytic cleavage activity in the active site.

This sequence belongs to the peptidase S24 family.

Its function is as follows. Involved in UV protection and mutation. This chain is Protein SamA (samA), found in Salmonella typhimurium (strain LT2 / SGSC1412 / ATCC 700720).